The sequence spans 179 residues: Large ribosomal subunit protein uL5 (179 aa).

This sequence belongs to the universal ribosomal protein uL5 family. As to quaternary structure, part of the 50S ribosomal subunit; part of the 5S rRNA/L5/L18/L25 subcomplex. Contacts the 5S rRNA and the P site tRNA. Forms a bridge to the 30S subunit in the 70S ribosome.

Functionally, this is one of the proteins that bind and probably mediate the attachment of the 5S RNA into the large ribosomal subunit, where it forms part of the central protuberance. In the 70S ribosome it contacts protein S13 of the 30S subunit (bridge B1b), connecting the 2 subunits; this bridge is implicated in subunit movement. Contacts the P site tRNA; the 5S rRNA and some of its associated proteins might help stabilize positioning of ribosome-bound tRNAs. This is Large ribosomal subunit protein uL5 from Staphylococcus carnosus (strain TM300).